A 520-amino-acid chain; its full sequence is tRNA-2-methylthio-N(6)-dimethylallyladenosine synthase (520 aa).

One can recognise an MTTase N-terminal domain in the interval 77-195 (KKFLIRTYGC…LPHLLRDAIF (119 aa)). The [4Fe-4S] cluster site is built by C86, C122, C156, C232, C236, and C239. Residues 218–448 (RKNKTQAWVN…ALVNDISNKR (231 aa)) enclose the Radical SAM core domain. A TRAM domain is found at 450-513 (LDYQDKIVEV…TWSLDGEIVS (64 aa)).

This sequence belongs to the methylthiotransferase family. MiaB subfamily. As to quaternary structure, monomer. It depends on [4Fe-4S] cluster as a cofactor.

It localises to the cytoplasm. The enzyme catalyses N(6)-dimethylallyladenosine(37) in tRNA + (sulfur carrier)-SH + AH2 + 2 S-adenosyl-L-methionine = 2-methylsulfanyl-N(6)-dimethylallyladenosine(37) in tRNA + (sulfur carrier)-H + 5'-deoxyadenosine + L-methionine + A + S-adenosyl-L-homocysteine + 2 H(+). Catalyzes the methylthiolation of N6-(dimethylallyl)adenosine (i(6)A), leading to the formation of 2-methylthio-N6-(dimethylallyl)adenosine (ms(2)i(6)A) at position 37 in tRNAs that read codons beginning with uridine. This Shouchella clausii (strain KSM-K16) (Alkalihalobacillus clausii) protein is tRNA-2-methylthio-N(6)-dimethylallyladenosine synthase.